Consider the following 169-residue polypeptide: Der GTPase-activating protein YihI (169 aa).

Disordered stretches follow at residues 1–98 and 144–169; these read MKPS…PQAE and GLSY…LRGN. A compositionally biased stretch (basic residues) spans 10–19; the sequence is SKGHAKARRK. Over residues 20 to 30 the composition is skewed to basic and acidic residues; the sequence is TREELDQEARD. Over residues 31–40 the composition is skewed to basic residues; that stretch reads RKRQKKRRGH. Polar residues predominate over residues 49–58; sequence GNTTSGSKGQ. Residues 147–159 are compositionally biased toward acidic residues; it reads YDDDEEEEEDEKQ. Positions 160-169 are enriched in basic and acidic residues; the sequence is EDMMRLLRGN.

The protein belongs to the YihI family. As to quaternary structure, interacts with Der.

In terms of biological role, a GTPase-activating protein (GAP) that modifies Der/EngA GTPase function. May play a role in ribosome biogenesis. The chain is Der GTPase-activating protein YihI from Escherichia coli O139:H28 (strain E24377A / ETEC).